A 573-amino-acid chain; its full sequence is Dihydroxy-acid dehydratase (573 aa).

Cys-62 contributes to the [2Fe-2S] cluster binding site. A Mg(2+)-binding site is contributed by Asp-94. [2Fe-2S] cluster is bound at residue Cys-135. Asp-136 and Lys-137 together coordinate Mg(2+). An N6-carboxylysine modification is found at Lys-137. A [2Fe-2S] cluster-binding site is contributed by Cys-212. Position 463 (Glu-463) interacts with Mg(2+). The Proton acceptor role is filled by Ser-489.

The protein belongs to the IlvD/Edd family. Homodimer. It depends on [2Fe-2S] cluster as a cofactor. The cofactor is Mg(2+).

The catalysed reaction is (2R)-2,3-dihydroxy-3-methylbutanoate = 3-methyl-2-oxobutanoate + H2O. It carries out the reaction (2R,3R)-2,3-dihydroxy-3-methylpentanoate = (S)-3-methyl-2-oxopentanoate + H2O. The protein operates within amino-acid biosynthesis; L-isoleucine biosynthesis; L-isoleucine from 2-oxobutanoate: step 3/4. It participates in amino-acid biosynthesis; L-valine biosynthesis; L-valine from pyruvate: step 3/4. Its function is as follows. Functions in the biosynthesis of branched-chain amino acids. Catalyzes the dehydration of (2R,3R)-2,3-dihydroxy-3-methylpentanoate (2,3-dihydroxy-3-methylvalerate) into 2-oxo-3-methylpentanoate (2-oxo-3-methylvalerate) and of (2R)-2,3-dihydroxy-3-methylbutanoate (2,3-dihydroxyisovalerate) into 2-oxo-3-methylbutanoate (2-oxoisovalerate), the penultimate precursor to L-isoleucine and L-valine, respectively. This Arthrobacter sp. (strain FB24) protein is Dihydroxy-acid dehydratase.